The following is a 607-amino-acid chain: MDKQERYNRRENIRNFSIIAHIDHGKSTLADRILENTKSVETREMQDQLLDSMDLERERGITIKLNAVRLKYEAKDGETYTFHLIDTPGHVDFTYEVSRSLAACEGAILVVDAAQGIEAQTLANVYLALDNDLELLPVVNKIDLPAAEPDRVKQELEDVIGIDQEDVVLASAKSNIGIEEILEKIVDVVPAPDGDPEAPLKALIFDSEYDPYRGVISSIRIIDGVVKAGDRIKMMATGKEFEVTEVGINTPKQLPVEELTVGDVGYIIASIKNVDDSRVGDTITLAERPADKPLQGYKKMNPMVFCGLFPIDNKDYNDLREALEKLQLNDASLEFEPESSQALGFGYRTGFLGMLHMEIIQERIEREFGIELIATAPSVIYQCILKDGSEVSVDNPAQMPERDKIEHIYEPFVKATMMVPNDYVGAVMELCQRKRGQFINMDYLDDIRVNIVYEIPLSEVVFDFFDQLKSNTKGYASFDYEFIENKESNLVKMDILLNGDKVDALSFIVHRDFAYERGKALVEKLKTLIPRQQFEVPVQAAIGQKIVARTNIKSMGKNVLSKCYGGDISRKRKLLEKQKAGKAKMKAVGNVEIPQDAFLAVLKMDDE.

Residues 11–193 form the tr-type G domain; that stretch reads ENIRNFSIIA…KIVDVVPAPD (183 aa). Residues 23–28 and 140–143 contribute to the GTP site; these read DHGKST and NKID.

This sequence belongs to the TRAFAC class translation factor GTPase superfamily. Classic translation factor GTPase family. LepA subfamily.

Its subcellular location is the cell membrane. It carries out the reaction GTP + H2O = GDP + phosphate + H(+). In terms of biological role, required for accurate and efficient protein synthesis under certain stress conditions. May act as a fidelity factor of the translation reaction, by catalyzing a one-codon backward translocation of tRNAs on improperly translocated ribosomes. Back-translocation proceeds from a post-translocation (POST) complex to a pre-translocation (PRE) complex, thus giving elongation factor G a second chance to translocate the tRNAs correctly. Binds to ribosomes in a GTP-dependent manner. The protein is Elongation factor 4 of Staphylococcus epidermidis (strain ATCC 35984 / DSM 28319 / BCRC 17069 / CCUG 31568 / BM 3577 / RP62A).